The following is a 562-amino-acid chain: Probable ganciclovir kinase (562 aa).

Over residues 1–16 the composition is skewed to polar residues; it reads MDNGVETPQGQKTQPI. The segment at 1-32 is disordered; that stretch reads MDNGVETPQGQKTQPINLPPVRKKLRKHEGLG. Residues 201 to 209 and K218 contribute to the ATP site; that span reads LGVGAYGKV. The active-site Proton acceptor is D313.

Belongs to the protein kinase superfamily. Tyr protein kinase family. HCMV ganciclovir subfamily.

Functionally, phosphorylates the antiviral nucleoside analog ganciclovir. This is Probable ganciclovir kinase (U69) from Homo sapiens (Human).